The following is a 227-amino-acid chain: Large ribosomal subunit protein uL3 (227 aa).

The tract at residues 144–166 is disordered; sequence RRGPMAHGSKNHRLPGSTGPGTT.

This sequence belongs to the universal ribosomal protein uL3 family. In terms of assembly, part of the 50S ribosomal subunit. Forms a cluster with proteins L14 and L19.

One of the primary rRNA binding proteins, it binds directly near the 3'-end of the 23S rRNA, where it nucleates assembly of the 50S subunit. The chain is Large ribosomal subunit protein uL3 from Trichodesmium erythraeum (strain IMS101).